The primary structure comprises 470 residues: Box C/D snoRNA protein 1 (470 aa).

The tract at residues 1–70 is disordered; sequence MEFAAENEGK…EEGSGQRPEE (70 aa). Position 25 is a phosphoserine (Ser25). Residues 41-51 are compositionally biased toward gly residues; sequence EFGGGEEGTGL. Residues Lys79, Lys108, Lys118, Lys138, Lys143, Lys153, Lys162, Lys173, Lys183, and Lys200 each participate in a glycyl lysine isopeptide (Lys-Gly) (interchain with G-Cter in SUMO2) cross-link. 8 residues coordinate Zn(2+): Cys220, Cys223, Cys232, Cys235, Cys240, Cys244, His248, and Cys254. Residues 220–254 form an HIT-type zinc finger; sequence CETCGTEEAKYRCPRCMRYSCSLPCVKKHKAELTC. A Glycyl lysine isopeptide (Lys-Gly) (interchain with G-Cter in SUMO2) cross-link involves residue Lys459.

Belongs to the BCD1 family. As to quaternary structure, interacts with FBL, SNU13, NOP58, NUFIP1, RUVBL1, RUVBL2 and TAF9. Interacts (via HIT-type zinc finger) with the RUVBL1/RUVBL2 complex in the presence of ADP.

Its function is as follows. Required for box C/D snoRNAs accumulation involved in snoRNA processing, snoRNA transport to the nucleolus and ribosome biogenesis. The polypeptide is Box C/D snoRNA protein 1 (ZNHIT6) (Homo sapiens (Human)).